A 103-amino-acid chain; its full sequence is Iron-sulfur cluster assembly protein CyaY (103 aa).

It belongs to the frataxin family.

Involved in iron-sulfur (Fe-S) cluster assembly. May act as a regulator of Fe-S biogenesis. In Rickettsia rickettsii (strain Iowa), this protein is Iron-sulfur cluster assembly protein CyaY.